The sequence spans 119 residues: RIIa domain-containing protein 1 (119 aa).

The RIIa domain maps to 70-104 (KEVSLLISGFFREMFLKRPDNILEFAAHYFTDPRL).

In terms of tissue distribution, abundant in tissues rich in highly ciliated cells, such as testis, trachea and olfactory epithelium.

This chain is RIIa domain-containing protein 1 (Riiad1), found in Mus musculus (Mouse).